Consider the following 130-residue polypeptide: Flagellar assembly factor FliW (130 aa).

It belongs to the FliW family. Interacts with translational regulator CsrA and flagellin(s).

Its subcellular location is the cytoplasm. Its function is as follows. Acts as an anti-CsrA protein, binds CsrA and prevents it from repressing translation of its target genes, one of which is flagellin. Binds to flagellin and participates in the assembly of the flagellum. This is Flagellar assembly factor FliW from Borreliella burgdorferi (strain ATCC 35210 / DSM 4680 / CIP 102532 / B31) (Borrelia burgdorferi).